Here is a 656-residue protein sequence, read N- to C-terminus: Macrolide export ATP-binding/permease protein MacB (656 aa).

The ABC transporter domain occupies 6–244; it reads LEVSACYRSF…AAPKTEVIPA (239 aa). ATP is bound at residue 42–49; the sequence is GASGSGKS. Helical transmembrane passes span 277–297, 531–551, 586–606, and 621–641; these read FLTM…VALG, LLIS…VMNI, LVCL…GVVF, and SIVA…FLPA.

It belongs to the ABC transporter superfamily. Macrolide exporter (TC 3.A.1.122) family. Homodimer. Part of the tripartite efflux system MacAB-TolC, which is composed of an inner membrane transporter, MacB, a periplasmic membrane fusion protein, MacA, and an outer membrane component, TolC. The complex forms a large protein conduit and can translocate molecules across both the inner and outer membranes. Interacts with MacA.

The protein resides in the cell inner membrane. In terms of biological role, part of the tripartite efflux system MacAB-TolC. MacB is a non-canonical ABC transporter that contains transmembrane domains (TMD), which form a pore in the inner membrane, and an ATP-binding domain (NBD), which is responsible for energy generation. Confers resistance against macrolides. The sequence is that of Macrolide export ATP-binding/permease protein MacB from Shewanella sp. (strain ANA-3).